The following is a 446-amino-acid chain: ATP-dependent protease ATPase subunit HslU (446 aa).

ATP contacts are provided by residues I18, 60-65, D259, E324, and R396; that span reads GVGKTE.

Belongs to the ClpX chaperone family. HslU subfamily. A double ring-shaped homohexamer of HslV is capped on each side by a ring-shaped HslU homohexamer. The assembly of the HslU/HslV complex is dependent on binding of ATP.

The protein resides in the cytoplasm. ATPase subunit of a proteasome-like degradation complex; this subunit has chaperone activity. The binding of ATP and its subsequent hydrolysis by HslU are essential for unfolding of protein substrates subsequently hydrolyzed by HslV. HslU recognizes the N-terminal part of its protein substrates and unfolds these before they are guided to HslV for hydrolysis. This Baumannia cicadellinicola subsp. Homalodisca coagulata protein is ATP-dependent protease ATPase subunit HslU.